Here is a 71-residue protein sequence, read N- to C-terminus: Gas vesicle protein A (71 aa).

The alpha helix 1 stretch occupies residues 12-22; sequence LAEVIDRILDK. The interval 26–34 is beta-strand 1; it reads VDAWVRVSL. Positions 35-37 are beta turn; it reads VGI. The beta-strand 2 stretch occupies residues 38–46; sequence ELLAIEARI. Residues 51–70 form an alpha helix 2 region; the sequence is VETYLKYAEAVGLTQSAAVP.

It belongs to the gas vesicle GvpA family. In terms of assembly, the gas vesicle shell is 2 nm thick and consists of a single layer of this protein. It forms helical ribs nearly perpendicular to the long axis of the vesicle.

Its subcellular location is the gas vesicle shell. Its function is as follows. Gas vesicles are hollow, gas filled proteinaceous nanostructures found in some microorganisms. During planktonic growth they allow positioning of the organism at a favorable depth for light or nutrient acquisition. GvpA forms the protein shell. The polypeptide is Gas vesicle protein A (Microchaete diplosiphon (Fremyella diplosiphon)).